Consider the following 472-residue polypeptide: MVRRLARGCWSAFWDYETPKVIVVRNRRLGFVHRMVQLLILLYFVWYVFIVQKSYQDSETGPESSIITKVKGITMSEDKVWDVEEYVKPPEGGSVVSIITRIEVTPSQTLGTCPESMRVHSSTCHSDDDCIAGQLDMQGNGIRTGHCVPYYHGDSKTCEVSAWCPVEDGTSDNHFLGKMAPNFTILIKNSIHYPKFKFSKGNIASQKSDYLKHCTFDQDSDPYCPIFRLGFIVEKAGENFTELAHKGGVIGVIINWNCDLDLSESECNPKYSFRRLDPKYDPASSGYNFRFAKYYKINGTTTTRTLIKAYGIRIDVIVHGQAGKFSLIPTIINLATALTSIGVGSFLCDWILLTFMNKNKLYSHKKFDKVRTPKHPSSRWPVTLALVLGQIPPPPSHYSQDQPPSPPSGEGPTLGEGAELPLAVQSPRPCSISALTEQVVDTLGQHMGQRPPVPEPSQQDSTSTDPKGLAQL.

Residues 1-34 (MVRRLARGCWSAFWDYETPKVIVVRNRRLGFVHR) lie on the Cytoplasmic side of the membrane. Cystine bridges form between C9–C430, C113–C164, C124–C147, C130–C158, C214–C224, and C258–C267. Residues 35-52 (MVQLLILLYFVWYVFIVQ) traverse the membrane as a helical segment. Topologically, residues 53 to 326 (KSYQDSETGP…IVHGQAGKFS (274 aa)) are extracellular. Positions 69 and 71 each coordinate ATP. A glycan (N-linked (GlcNAc...) asparagine) is linked at N182. ATP is bound at residue T184. An N-linked (GlcNAc...) asparagine glycan is attached at N239. S284, N288, and R290 together coordinate ATP. A glycan (N-linked (GlcNAc...) asparagine) is linked at N298. Position 308 (K308) interacts with ATP. The tract at residues 309–322 (AYGIRIDVIVHGQA) is pore-forming motif. Residues 327–347 (LIPTIINLATALTSIGVGSFL) form a helical membrane-spanning segment. The Cytoplasmic segment spans residues 348 to 472 (CDWILLTFMN…STDPKGLAQL (125 aa)). Positions 393–472 (PPPSHYSQDQ…STDPKGLAQL (80 aa)) are disordered. Residues 456-465 (PSQQDSTSTD) are compositionally biased toward polar residues.

This sequence belongs to the P2X receptor family. As to quaternary structure, homotrimer and heterotrimer; functional P2XRs are organized as homomeric and heteromeric trimers. Homotrimer. Forms heterotrimer with P2RX1. Forms heterotrimer with P2RX6. Forms heterotrimer with P2RX3. As to expression, high levels in pituitary and vas deferens. Lower extent in spinal cord, bladder, brain, adrenal, testis, sensory epithelia from the inner ear.

The protein resides in the cell membrane. It carries out the reaction Ca(2+)(in) = Ca(2+)(out). It catalyses the reaction K(+)(in) = K(+)(out). The catalysed reaction is Na(+)(in) = Na(+)(out). Fast activation by external ATP. Exhibits slow desensitization during prolonged ATP activation. Not sensitive to the ATP agonist:alpha/beta-methylene-ATP. Functionally, ATP-gated nonselective transmembrane cation channel permeable to potassium, sodium and calcium. Activation by extracellular ATP induces a variety of cellular responses, such as excitatory postsynaptic responses in sensory neurons, neuromuscular junctions (NMJ) formation, hearing, perception of taste and peristalsis. In the inner ear, regulates sound transduction and auditory neurotransmission, outer hair cell electromotility, inner ear gap junctions, and K(+) recycling. Mediates synaptic transmission between neurons and from neurons to smooth muscle. This Rattus norvegicus (Rat) protein is P2X purinoceptor 2 (P2rx2).